A 320-amino-acid chain; its full sequence is uncharacterized protein (320 aa).

The interval 1 to 40 (MDHPSTSSLPRKKVKAGVKKAGKKTGKKTTGKKKTTPSAI) is disordered. A compositionally biased stretch (basic residues) spans 10–35 (PRKKVKAGVKKAGKKTGKKTTGKKKT). Residues 51 to 71 (LLVLLAVLSYLAALSLGLYIM) form a helical membrane-spanning segment. 4 N-linked (GlcNAc...) asparagine glycosylation sites follow: Asn-92, Asn-122, Asn-154, and Asn-167. The next 2 membrane-spanning stretches (helical) occupy residues 186 to 206 (PLVH…AMTG) and 216 to 236 (MLVT…VTVL). The N-linked (GlcNAc...) asparagine glycan is linked to Asn-247. The chain crosses the membrane as a helical span at residues 272–292 (VQGALVAIVAVFYLTMGVVFV).

The protein resides in the membrane. It functions in the pathway secondary metabolite biosynthesis; terpenoid biosynthesis. Functionally, part of the gene cluster that mediates the biosynthesis of an ophiobolin family sesterterpenoid. This is an uncharacterized protein from Aspergillus terreus.